The primary structure comprises 113 residues: Hydrogenase maturation factor HypA (113 aa).

Histidine 2 is a binding site for Ni(2+). 4 residues coordinate Zn(2+): cysteine 73, cysteine 75, cysteine 89, and cysteine 92.

The protein belongs to the HypA/HybF family.

In terms of biological role, involved in the maturation of [NiFe] hydrogenases. Required for nickel insertion into the metal center of the hydrogenase. The chain is Hydrogenase maturation factor HypA from Methanocella arvoryzae (strain DSM 22066 / NBRC 105507 / MRE50).